Consider the following 344-residue polypeptide: Phosphoribosylformylglycinamidine cyclo-ligase (344 aa).

It belongs to the AIR synthase family.

Its subcellular location is the cytoplasm. The enzyme catalyses 2-formamido-N(1)-(5-O-phospho-beta-D-ribosyl)acetamidine + ATP = 5-amino-1-(5-phospho-beta-D-ribosyl)imidazole + ADP + phosphate + H(+). It functions in the pathway purine metabolism; IMP biosynthesis via de novo pathway; 5-amino-1-(5-phospho-D-ribosyl)imidazole from N(2)-formyl-N(1)-(5-phospho-D-ribosyl)glycinamide: step 2/2. This chain is Phosphoribosylformylglycinamidine cyclo-ligase, found in Exiguobacterium sibiricum (strain DSM 17290 / CCUG 55495 / CIP 109462 / JCM 13490 / 255-15).